The primary structure comprises 845 residues: Beta-galactosidase 11 (845 aa).

The N-terminal stretch at 1–26 (MRKHSLDRWLLTAVLVVLLSSSSSFA) is a signal peptide. N104 is a glycosylation site (N-linked (GlcNAc...) asparagine). Residue E197 is the Proton donor of the active site. E268 serves as the catalytic Nucleophile. N269, N300, N395, N752, N784, and N814 each carry an N-linked (GlcNAc...) asparagine glycan. The SUEL-type lectin domain occupies 751–840 (DNVSLTATLK…KMLAVQVKCG (90 aa)).

This sequence belongs to the glycosyl hydrolase 35 family.

It is found in the secreted. Its subcellular location is the extracellular space. The protein localises to the apoplast. The enzyme catalyses Hydrolysis of terminal non-reducing beta-D-galactose residues in beta-D-galactosides.. The protein is Beta-galactosidase 11 (BGAL11) of Arabidopsis thaliana (Mouse-ear cress).